The chain runs to 183 residues: UPF0134 protein MPN_100 (183 aa).

Belongs to the UPF0134 family.

In Mycoplasma pneumoniae (strain ATCC 29342 / M129 / Subtype 1) (Mycoplasmoides pneumoniae), this protein is UPF0134 protein MPN_100.